Reading from the N-terminus, the 1413-residue chain is Zinc finger protein 609 (1413 aa).

5 disordered regions span residues 1-26 (MSLS…SGDE), 47-196 (QKLE…GRGS), 354-484 (RFCD…EPTL), 517-659 (AHAH…RPIA), and 695-765 (PNSP…AAGD). Phosphoserine is present on residues Ser-358, Ser-361, and Ser-379. Thr-381 carries the phosphothreonine modification. Residues 386 to 405 (AAAASDSKGTSSSSKTRAGA) show a composition bias toward low complexity. 6 positions are modified to phosphoserine: Ser-413, Ser-433, Ser-446, Ser-452, Ser-467, and Ser-470. Over residues 423–437 (ASSTSEDVKASPSSA) the composition is skewed to polar residues. Lys-479 participates in a covalent cross-link: Glycyl lysine isopeptide (Lys-Gly) (interchain with G-Cter in SUMO2). A C2H2-type zinc finger spans residues 495–520 (IDCPHPNCNKKYKHINGLKYHQAHAH). Residues 519–529 (AHTDDDSKPEA) show a composition bias toward basic and acidic residues. Ser-533, Ser-575, and Ser-577 each carry phosphoserine. Over residues 625–648 (SLERKCMEKEKCKKPSSLKSEKIP) the composition is skewed to basic and acidic residues. The segment covering 725–735 (DKKKKDKKKKD) has biased composition (basic residues). Ser-742 bears the Phosphoserine mark. Thr-745 carries the post-translational modification Phosphothreonine. Residues 750–763 (CRAEEGKSPFRDAA) show a composition bias toward basic and acidic residues. Ser-757 bears the Phosphoserine mark. Lys-788 participates in a covalent cross-link: Glycyl lysine isopeptide (Lys-Gly) (interchain with G-Cter in SUMO2). A compositionally biased stretch (polar residues) spans 797-843 (FTDNAPSPSIGGSSRLDSTTPTQPLTPLHVVTQNGAEASSVKTNSPA). Disordered regions lie at residues 797–962 (FTDN…VIQQ), 1004–1127 (YEEQ…RQAE), 1154–1221 (IKSE…SPLT), and 1273–1369 (SKVS…STHH). Ser-803 is subject to Phosphoserine. Position 822 is a phosphothreonine (Thr-822). 3 positions are modified to phosphoserine: Ser-841, Ser-845, and Ser-848. Residues 854–875 (GEGKVDSAKSKDPEQLVKEGAK) are compositionally biased toward basic and acidic residues. Residues 902–916 (YAQSSPGTLTSSSQA) are compositionally biased toward polar residues. Residues 925 to 949 (TKKDEEPESVEGKVKNDVCEEKKPE) are compositionally biased toward basic and acidic residues. Positions 950-962 (LSNSSQQPSVIQQ) are enriched in polar residues. Positions 1022 to 1044 (GLDKKTEMGLKEREASLKEEWKQ) are enriched in basic and acidic residues. Ser-1057 carries the post-translational modification Phosphoserine. Lys-1063 participates in a covalent cross-link: Glycyl lysine isopeptide (Lys-Gly) (interchain with G-Cter in SUMO2). Basic and acidic residues-rich tracts occupy residues 1099 to 1115 (LKGK…EASE), 1154 to 1189 (IKSE…KEST), and 1197 to 1210 (PSEE…EPRP). Lys-1155 participates in a covalent cross-link: Glycyl lysine isopeptide (Lys-Gly) (interchain with G-Cter in SUMO2). Residues 1288–1298 (PSVSCKASSES) show a composition bias toward polar residues. Lys-1299 is covalently cross-linked (Glycyl lysine isopeptide (Lys-Gly) (interchain with G-Cter in SUMO2)). Gly residues predominate over residues 1330–1348 (GCGVVGGGGSCGSVAGAGG).

Interacts (via N-terminus) with NIPBL. Interacts with the multiprotein complex Integrator. Expressed in myoblasts. Expressed in neurons in various brain regions, including striatum, prefrontal cortex, olfactory bulb, midbrain, cerebellum and hippocampus. Expressed in neural stem cells (at protein level). Expressed in thymocytes.

It is found in the nucleus. In terms of biological role, transcription factor, which activates RAG1, and possibly RAG2, transcription. Through the regulation of RAG1/2 expression, may regulate thymocyte maturation. Along with NIPBL and the multiprotein complex Integrator, promotes cortical neuron migration during brain development by regulating the transcription of crucial genes in this process. Preferentially binds promoters containing paused RNA polymerase II. Up-regulates the expression of SEMA3A, NRP1, PLXND1 and GABBR2 genes, among others. Functionally, involved in regulation of myoblast proliferation during myogenesis. The protein is Zinc finger protein 609 (Znf609) of Mus musculus (Mouse).